A 106-amino-acid chain; its full sequence is Programmed cell death activator egl-1 (106 aa).

A BH3-like region spans residues 73-81 (LAAMCDDFD).

As to quaternary structure, interacts with ced-9; the interaction results in ced-4 release from the ced-4/ced-9 complex. Interaction with ced-9 may enhance interaction of ced-9 with drp-1, but not with ced-4. A ced-9/egl-1 complex may recruit drp-1 to the mitochondrial surface.

It is found in the synapse. Functionally, plays a major role in programmed cell death (PCD or apoptosis) by negatively regulating ced-9. Binds to and directly inhibits the activity of ced-9, releasing the cell death activator ced-4 from a ced-9/ced-4 containing protein complex and allowing ced-4 to activate the cell-killing caspase ced-3. Required to activate programmed cell death in the sister cells of the serotonergic neurosecretory motor (NSM) neurons during embryogenesis. Required to activate programmed cell death in the sister cells of the M4 motor neuron and I1 pharyngeal neuron during embryogenesis. During larval development, required for the elimination of transient presynaptic components upstream of ced-9, ced-4 and ced-3 apoptotic pathway. Together with ain-1, a component of the miRNA-induced-silencing complex (miRISC), and probably upstream of ced-3 and ced-4, regulates temporal cell fate patterning during larval development. Has been shown in two studies to be dispensable in mitochondrial dynamics and morphology during early embryonic development. However, one study shows that during larval development, egl-1 is involved in modulating mitochondrial dynamics, perhaps acting by stabilizing the interaction between ced-9 and drp-1 in order to promote mitochondrial fission. Involved in inducing mitochondrial fragmentation during apoptosis, probably acting via ced-9 and dynamin-related protein drp-1. The polypeptide is Programmed cell death activator egl-1 (Caenorhabditis elegans).